Here is an 863-residue protein sequence, read N- to C-terminus: Leucine--tRNA ligase (863 aa).

The 'HIGH' region motif lies at 42 to 52; sequence PYPSGKIHMGH. The 'KMSKS' region motif lies at 618–622; the sequence is KMSKS. Residue Lys621 coordinates ATP.

Belongs to the class-I aminoacyl-tRNA synthetase family.

Its subcellular location is the cytoplasm. The enzyme catalyses tRNA(Leu) + L-leucine + ATP = L-leucyl-tRNA(Leu) + AMP + diphosphate. The polypeptide is Leucine--tRNA ligase (Desulforapulum autotrophicum (strain ATCC 43914 / DSM 3382 / VKM B-1955 / HRM2) (Desulfobacterium autotrophicum)).